The sequence spans 92 residues: Enhancer of yellow 2 transcription factor (92 aa).

It belongs to the ENY2 family. Component of the nuclear pore complex (NPC)-associated TREX-2 complex (transcription and export complex 2). Component of the SAGA transcription coactivator-HAT complex. Within the SAGA complex, participates in a subcomplex of SAGA called the DUB module (deubiquitination module).

It is found in the nucleus. The protein localises to the nucleoplasm. Its function is as follows. Involved in mRNA export coupled transcription activation by association with both the TREX-2 and the SAGA complexes. The transcription regulatory histone acetylation (HAT) complex SAGA is a multiprotein complex that activates transcription by remodeling chromatin and mediating histone acetylation and deubiquitination. Within the SAGA complex, participates in a subcomplex that specifically deubiquitinates histones. The SAGA complex is recruited to specific gene promoters by activators, where it is required for transcription. The TREX-2 complex functions in docking export-competent ribonucleoprotein particles (mRNPs) to the nuclear entrance of the nuclear pore complex (nuclear basket). TREX-2 participates in mRNA export and accurate chromatin positioning in the nucleus by tethering genes to the nuclear periphery. The polypeptide is Enhancer of yellow 2 transcription factor (Aedes aegypti (Yellowfever mosquito)).